Here is a 160-residue protein sequence, read N- to C-terminus: Transcriptional repressor NrdR (160 aa).

The segment at Cys3 to Cys34 is a zinc-finger region. Residues Leu49–Val139 enclose the ATP-cone domain.

The protein belongs to the NrdR family. Zn(2+) serves as cofactor.

Negatively regulates transcription of bacterial ribonucleotide reductase nrd genes and operons by binding to NrdR-boxes. The polypeptide is Transcriptional repressor NrdR (Exiguobacterium sibiricum (strain DSM 17290 / CCUG 55495 / CIP 109462 / JCM 13490 / 255-15)).